The primary structure comprises 234 residues: Transcription factor UDT1 (234 aa).

A disordered region spans residues 1–51; it reads MPRRARARGGGGGGGEEVKVEDDFIDSVLNFGGGGGGEEDGDDGEEEQQQQ. Over residues 37-48 the composition is skewed to acidic residues; sequence GEEDGDDGEEEQ. The interval 61–74 is basic motif; degenerate; that stretch reads EFKSKNLEAERRRR. Positions 61 to 110 constitute a bHLH domain; that stretch reads EFKSKNLEAERRRRGRLNGNIFALRAVVPKITKMSKEATLSDAIEHIKNL. The helix-loop-helix motif stretch occupies residues 75–110; it reads GRLNGNIFALRAVVPKITKMSKEATLSDAIEHIKNL.

Belongs to the bHLH protein family.

The protein resides in the nucleus. Transcription factor that plays a crucial role in tapetum development. Required for male fertility and pollen differentiation within the developing anther. Plays a major role in maintaining tapetum development, starting in early meiosis. Required for pollen mother cell meiosis. May regulate the anther-specific cysteine protease CP1 and lipid-transfer proteins C4 and C6. Required for anther development. Functions in parallel with GAMYB to regulate early anther development. Functions upstream of the transcription factor TDR and may positively regulate its transcription. The chain is Transcription factor UDT1 from Oryza sativa subsp. japonica (Rice).